The sequence spans 361 residues: Ribosomal RNA large subunit methyltransferase M (361 aa).

S-adenosyl-L-methionine-binding positions include serine 187, 220–223, aspartate 239, aspartate 259, and aspartate 276; that span reads CPGG. Lysine 305 serves as the catalytic Proton acceptor.

This sequence belongs to the class I-like SAM-binding methyltransferase superfamily. RNA methyltransferase RlmE family. RlmM subfamily. In terms of assembly, monomer.

The protein resides in the cytoplasm. It catalyses the reaction cytidine(2498) in 23S rRNA + S-adenosyl-L-methionine = 2'-O-methylcytidine(2498) in 23S rRNA + S-adenosyl-L-homocysteine + H(+). Functionally, catalyzes the 2'-O-methylation at nucleotide C2498 in 23S rRNA. This Shewanella amazonensis (strain ATCC BAA-1098 / SB2B) protein is Ribosomal RNA large subunit methyltransferase M.